The chain runs to 460 residues: MRITNTLTGKKEEFVPIQPGVVRMYVCGPTVYDLIHVGNARPALVFDVFRRYLEYRGYRVIMVQNFTDIDDKIINKANQLGVDYKTVADTFIAEYWRDAHALGIRPANFHPRTTDFVEDIVEIIEKLVEKGFAYQTETGVYFDVRKFEKYGELSKKKIEDLIAGARVEVDETKKSPLDFSLWKKAKPGEPCWKSPWGEGRPGWHIECTVMSVKILGESFDIHAGGEDLVFPHHENEKAQAEALTGKVFARYWMHNGMVRFLGDKMSKSTGNIFTVREAVKRYGRDGLRYMILSKHYRSPMDFSEELLQDYSRAVKRVWEILGRYEKSGDIGIPKRNAVYEEYVNRFVEALDDDFNTPVAVSLIFELARNLSKAMDDNDREDALLYYHLIRREFGPVLGLFDLNEEKKEVSSEELLKLLIEVRDVLRKEKRYDLSDRIRDRLREIGIILKDTPSGTEYTVE.

C27 provides a ligand contact to Zn(2+). The 'HIGH' region motif lies at 29–39; the sequence is PTVYDLIHVGN. Positions 207, 232, and 236 each coordinate Zn(2+). The 'KMSKS' region motif lies at 264–268; that stretch reads KMSKS. K267 contacts ATP.

This sequence belongs to the class-I aminoacyl-tRNA synthetase family. As to quaternary structure, monomer. Requires Zn(2+) as cofactor.

The protein resides in the cytoplasm. It catalyses the reaction tRNA(Cys) + L-cysteine + ATP = L-cysteinyl-tRNA(Cys) + AMP + diphosphate. This chain is Cysteine--tRNA ligase (cysS), found in Thermotoga maritima (strain ATCC 43589 / DSM 3109 / JCM 10099 / NBRC 100826 / MSB8).